The primary structure comprises 449 residues: Ribosomal protein uS12 methylthiotransferase RimO (449 aa).

The MTTase N-terminal domain maps to proline 16–alanine 126. [4Fe-4S] cluster-binding residues include cysteine 25, cysteine 61, cysteine 90, cysteine 157, cysteine 161, and cysteine 164. One can recognise a Radical SAM core domain in the interval leucine 143–arginine 381. Residues arginine 384 to valine 449 form the TRAM domain.

This sequence belongs to the methylthiotransferase family. RimO subfamily. It depends on [4Fe-4S] cluster as a cofactor.

It localises to the cytoplasm. The enzyme catalyses L-aspartate(89)-[ribosomal protein uS12]-hydrogen + (sulfur carrier)-SH + AH2 + 2 S-adenosyl-L-methionine = 3-methylsulfanyl-L-aspartate(89)-[ribosomal protein uS12]-hydrogen + (sulfur carrier)-H + 5'-deoxyadenosine + L-methionine + A + S-adenosyl-L-homocysteine + 2 H(+). Its function is as follows. Catalyzes the methylthiolation of an aspartic acid residue of ribosomal protein uS12. This is Ribosomal protein uS12 methylthiotransferase RimO from Beijerinckia indica subsp. indica (strain ATCC 9039 / DSM 1715 / NCIMB 8712).